A 72-amino-acid polypeptide reads, in one-letter code: MPSQQDEKRQAAREVIDILHEISTLLNTHLDRTELSLCVSLIENGVNPEALATVIKELRKESSQSRGLVGGE.

The protein belongs to the MOZART1 family. Part of the gamma-tubulin complex.

It localises to the cytoplasm. It is found in the cytoskeleton. The protein localises to the microtubule organizing center. Its subcellular location is the spindle pole body. Its function is as follows. Required for gamma-tubulin complex recruitment to the microtubule organizing center (MTOC). The sequence is that of Mitotic-spindle organizing protein 1 from Coccidioides immitis (strain RS) (Valley fever fungus).